Here is a 139-residue protein sequence, read N- to C-terminus: Putative pre-16S rRNA nuclease (139 aa).

The protein belongs to the YqgF nuclease family.

The protein localises to the cytoplasm. In terms of biological role, could be a nuclease involved in processing of the 5'-end of pre-16S rRNA. The sequence is that of Putative pre-16S rRNA nuclease from Proteus mirabilis (strain HI4320).